A 238-amino-acid chain; its full sequence is tRNA (guanine-N(7)-)-methyltransferase (238 aa).

4 residues coordinate S-adenosyl-L-methionine: Glu-68, Glu-93, Asp-120, and Asp-143. The active site involves Asp-143. Residues Lys-147, Asp-179, and 216 to 219 each bind substrate; that span reads TKFE.

Belongs to the class I-like SAM-binding methyltransferase superfamily. TrmB family.

It catalyses the reaction guanosine(46) in tRNA + S-adenosyl-L-methionine = N(7)-methylguanosine(46) in tRNA + S-adenosyl-L-homocysteine. Its pathway is tRNA modification; N(7)-methylguanine-tRNA biosynthesis. In terms of biological role, catalyzes the formation of N(7)-methylguanine at position 46 (m7G46) in tRNA. The sequence is that of tRNA (guanine-N(7)-)-methyltransferase from Shewanella frigidimarina (strain NCIMB 400).